The following is a 376-amino-acid chain: S-adenosylmethionine synthase (376 aa).

H14 is a binding site for ATP. Mg(2+) is bound at residue D16. E42 contacts K(+). 2 residues coordinate L-methionine: E55 and Q98. Positions 98 to 108 (QSPEIALGISS) are flexible loop. ATP contacts are provided by residues 158-160 (DGK), 224-225 (RF), D233, 239-240 (RK), A256, and K260. An L-methionine-binding site is contributed by D233. K264 is an L-methionine binding site.

This sequence belongs to the AdoMet synthase family. In terms of assembly, homotetramer; dimer of dimers. Requires Mg(2+) as cofactor. The cofactor is K(+).

Its subcellular location is the cytoplasm. The catalysed reaction is L-methionine + ATP + H2O = S-adenosyl-L-methionine + phosphate + diphosphate. It participates in amino-acid biosynthesis; S-adenosyl-L-methionine biosynthesis; S-adenosyl-L-methionine from L-methionine: step 1/1. In terms of biological role, catalyzes the formation of S-adenosylmethionine (AdoMet) from methionine and ATP. The overall synthetic reaction is composed of two sequential steps, AdoMet formation and the subsequent tripolyphosphate hydrolysis which occurs prior to release of AdoMet from the enzyme. This Aquifex aeolicus (strain VF5) protein is S-adenosylmethionine synthase.